The following is a 415-amino-acid chain: Glycerate 2-kinase (415 aa).

Lysine 57 serves as a coordination point for substrate.

This sequence belongs to the glycerate kinase type-1 family. In terms of assembly, homodimer. Mg(2+) serves as cofactor. It depends on Ni(2+) as a cofactor. Mn(2+) is required as a cofactor. Requires Co(2+) as cofactor.

The catalysed reaction is (R)-glycerate + ATP = (2R)-2-phosphoglycerate + ADP + H(+). In terms of biological role, catalyzes the ATP-dependent phosphorylation of D-glycerate to 2-phosphoglycerate. It can also partially utilize GTP, CTP or UTP as phosphate donor. This Picrophilus torridus (strain ATCC 700027 / DSM 9790 / JCM 10055 / NBRC 100828 / KAW 2/3) protein is Glycerate 2-kinase (gck).